The sequence spans 264 residues: MTTIHATAIVDSQAQLDSSVTVGPYSLIGPNVKVGAGTTIGPHCVIEGHTTIGRDNRIFQFSSLGAIPQDKKYAGEPCELVIGDRNTIREFCTFNIGSPGDLGVTRVGDDNWLMAYVHLAHDCVVGNKTIFANNSQLAGHVHVGDWAILGGFTVVHQFVKIGAHSMTALCTVLLADLPPFVMCQGQPAQARSMNYEGLRRRGFSPERIAVVKAMHKALYRESLTLQLARERIADLVKNSPESLPDVEMMLLFLEQTSPQRGIVR.

It belongs to the transferase hexapeptide repeat family. LpxA subfamily. As to quaternary structure, homotrimer.

The protein localises to the cytoplasm. It carries out the reaction a (3R)-hydroxyacyl-[ACP] + UDP-N-acetyl-alpha-D-glucosamine = a UDP-3-O-[(3R)-3-hydroxyacyl]-N-acetyl-alpha-D-glucosamine + holo-[ACP]. It functions in the pathway glycolipid biosynthesis; lipid IV(A) biosynthesis; lipid IV(A) from (3R)-3-hydroxytetradecanoyl-[acyl-carrier-protein] and UDP-N-acetyl-alpha-D-glucosamine: step 1/6. In terms of biological role, involved in the biosynthesis of lipid A, a phosphorylated glycolipid that anchors the lipopolysaccharide to the outer membrane of the cell. The sequence is that of Acyl-[acyl-carrier-protein]--UDP-N-acetylglucosamine O-acyltransferase from Albidiferax ferrireducens (strain ATCC BAA-621 / DSM 15236 / T118) (Rhodoferax ferrireducens).